Here is a 684-residue protein sequence, read N- to C-terminus: Glycine--tRNA ligase beta subunit (684 aa).

Belongs to the class-II aminoacyl-tRNA synthetase family. As to quaternary structure, tetramer of two alpha and two beta subunits.

It is found in the cytoplasm. The catalysed reaction is tRNA(Gly) + glycine + ATP = glycyl-tRNA(Gly) + AMP + diphosphate. This Pseudomonas aeruginosa (strain LESB58) protein is Glycine--tRNA ligase beta subunit.